The chain runs to 502 residues: Cytochrome P450 71B20 (502 aa).

Residues 1–21 (MAISFLCFCLITLASLIFFAK) form a helical membrane-spanning segment. A heme-binding site is contributed by Cys444.

It belongs to the cytochrome P450 family. Heme serves as cofactor.

The protein localises to the membrane. The protein is Cytochrome P450 71B20 (CYP71B20) of Arabidopsis thaliana (Mouse-ear cress).